The following is a 254-amino-acid chain: Coproheme decarboxylase (254 aa).

Fe-coproporphyrin III-binding positions include Arg136, 150–154 (YPMDK), His177, Gln190, and Ser228. Tyr150 is a catalytic residue.

Belongs to the ChdC family. Type 1 subfamily. It depends on Fe-coproporphyrin III as a cofactor.

It carries out the reaction Fe-coproporphyrin III + 2 H2O2 + 2 H(+) = heme b + 2 CO2 + 4 H2O. The catalysed reaction is Fe-coproporphyrin III + H2O2 + H(+) = harderoheme III + CO2 + 2 H2O. It catalyses the reaction harderoheme III + H2O2 + H(+) = heme b + CO2 + 2 H2O. It participates in porphyrin-containing compound metabolism; protoheme biosynthesis. Functionally, involved in coproporphyrin-dependent heme b biosynthesis. Catalyzes the decarboxylation of Fe-coproporphyrin III (coproheme) to heme b (protoheme IX), the last step of the pathway. The reaction occurs in a stepwise manner with a three-propionate intermediate. In Bacillus licheniformis (strain ATCC 14580 / DSM 13 / JCM 2505 / CCUG 7422 / NBRC 12200 / NCIMB 9375 / NCTC 10341 / NRRL NRS-1264 / Gibson 46), this protein is Coproheme decarboxylase.